The chain runs to 308 residues: ATP synthase gamma chain (308 aa).

The protein belongs to the ATPase gamma chain family. F-type ATPases have 2 components, CF(1) - the catalytic core - and CF(0) - the membrane proton channel. CF(1) has five subunits: alpha(3), beta(3), gamma(1), delta(1), epsilon(1). CF(0) has three main subunits: a, b and c.

The protein localises to the cell inner membrane. Its function is as follows. Produces ATP from ADP in the presence of a proton gradient across the membrane. The gamma chain is believed to be important in regulating ATPase activity and the flow of protons through the CF(0) complex. This chain is ATP synthase gamma chain, found in Bartonella tribocorum (strain CIP 105476 / IBS 506).